The following is an 832-amino-acid chain: Conserved oligomeric Golgi complex subunit 5 (832 aa).

2 stretches are compositionally biased toward pro residues: residues 1 to 11 and 23 to 38; these read MALPPSSPSPS and NPPPSSLSSGAPPPQT. The segment at 1–49 is disordered; sequence MALPPSSPSPSSPSLQRLSTFKNPPPSSLSSGAPPPQTPSSSSSSPLDS. Positions 39–49 are enriched in low complexity; it reads PSSSSSSPLDS.

This sequence belongs to the COG5 family. In terms of assembly, homodimer. Component of the conserved oligomeric Golgi complex which is composed of eight different subunits and is required for normal Golgi morphology and localization. Interacts with COG3, COG6, COG7 and COG8.

The protein resides in the golgi apparatus membrane. Functionally, required for normal Golgi function. This chain is Conserved oligomeric Golgi complex subunit 5, found in Arabidopsis thaliana (Mouse-ear cress).